Consider the following 1409-residue polypeptide: MKSLLDLFKQFTPDEHFDAIKIGMASPEKIRSWSFGEVKKPETINYRTFKPERDGLFCAKIFGPIKDYECLCGKYKRLKHRGVICEKCGVEVTQTKVRRERMGHIDLAAPCAHIWFLKSLPSRLGLVLDMTLRDIERVLYFEAYVITDPGMTPLKKFGIMSEDDYDAKRKEYGDEFVAKMGAEGIKDLLEGIELDSEIERLRGDLTGSEVKVKKNSKRLKVLEAFRKSGIKPEWMVLDVLPVLPPDLRPLVPLDGGRFATSDLNDLYRRVINRNSRLRRLLELKAPEIIARNEKRMLQEAVDSLLDNGRRGKAMTGANKRALKSLADMIKGKSGRFRQNLLGKRVDYSGRSVIVVGPTLKLHQCGLPKLMALELFKPFIFSRLEAMGIATTIKAAKKEVESGTPVVWDILEEVIKEHPVMLNRAPTLHRLGIQAFEPILIEGKAIQLHPLVCAAFNADFDGDQMAVHVPLSVEAQMEARTLMLASNNVLFPASGEPSIVPSQDVVLGLYYTTRDRINGKGEGLIFSDIGEVQRALDANEVELTAKVAVRITEYTKDKETGEFTPSTSLVDTTVGRALLSEILPKGLPFSNINKALKKKEISKLINVSFRKCGLKETVVFADKLLQNGFRLATKAGISIAIDDMLVPAEKHGIIERSAKEVKEIEQQYVSGLVTSGERYNKVVDIWGKAGDEVSKVMMAKLSKQKVIDRHGKEVEQESFNSIYMMADSGARGSAAQIRQVAGMRGLMAKPDGSIIETPITANFREGLNVLEYFISTHGARKGLADTALKTANSGYLTRRLVDVTQDLVVTEQDCGTHGGYLMRAIVEGGEVIESLRDRILGRSAADDVLHPENRSVLLKAGEMFDEDNIEELEAQGVDEVKVRTALTCETRFGICATCYGRDLGRGGLINIGEAVGVIAAQSIGEPGTQLTMRTFHIGGAASRAAVASSVEAKSNGVIGFNATMRYVTNSKNELVVIARSGEIVIHDEHGRERERHKVPYGAILAVKADQQIKAGHVLANWDPLTRPIITEFAGKTQFENVEEGLTVAKQVDEVTGLSTLVVIDPKRRGAAKVVRPQVKLIDASGAEVKIPGTDHSVTIGFPIGALVQIRDGQDVGPGEVLARIPVEGQKTRDITGGLPRVAELFEARSPKDKGMLAEMTGTVSFGKETKGKIRLQITDPEGTVWEDLVPKEKNILVHEGQVVNKGESVVDGPADPQDILRLLGSEELARYIVDEVQDVYRLQGVKINDKHIEVIVRQMLRRVVVDNIGETGYISGEQVERSEMLNTNDALRAEGKIPATFTNLLLGITKASLSTDSFISAASFQETTRVLTEAAIMGKRDELRGLKENVIVGRLIPAGTGMAYHQARKAKDQMDEAERRAIAESEAAELAGSTSDVSTTADASEGAASE.

Positions 70, 72, 85, and 88 each coordinate Zn(2+). Mg(2+)-binding residues include Asp-458, Asp-460, and Asp-462. The Zn(2+) site is built by Cys-813, Cys-887, Cys-894, and Cys-897. The span at 1385–1403 (EAAELAGSTSDVSTTADAS) shows a compositional bias: low complexity. The segment at 1385–1409 (EAAELAGSTSDVSTTADASEGAASE) is disordered.

It belongs to the RNA polymerase beta' chain family. The RNAP catalytic core consists of 2 alpha, 1 beta, 1 beta' and 1 omega subunit. When a sigma factor is associated with the core the holoenzyme is formed, which can initiate transcription. It depends on Mg(2+) as a cofactor. The cofactor is Zn(2+).

The catalysed reaction is RNA(n) + a ribonucleoside 5'-triphosphate = RNA(n+1) + diphosphate. Its function is as follows. DNA-dependent RNA polymerase catalyzes the transcription of DNA into RNA using the four ribonucleoside triphosphates as substrates. The chain is DNA-directed RNA polymerase subunit beta' from Variovorax paradoxus (strain S110).